Here is a 520-residue protein sequence, read N- to C-terminus: Probable cytochrome P450 4p2 (520 aa).

Heme is bound by residues Glu-325 and Cys-464.

The protein belongs to the cytochrome P450 family. Heme is required as a cofactor.

The protein resides in the endoplasmic reticulum membrane. It is found in the microsome membrane. Its function is as follows. May be involved in the metabolism of insect hormones and in the breakdown of synthetic insecticides. The sequence is that of Probable cytochrome P450 4p2 (Cyp4p2) from Drosophila melanogaster (Fruit fly).